A 204-amino-acid chain; its full sequence is Abscisic acid receptor PYL3 (204 aa).

An START-like region spans residues 40-191 (HEPRDHQCSS…NLKSLAEVSE (152 aa)). A disulfide bridge connects residues Cys-47 and Cys-172. Abscisate contacts are provided by residues Lys-76, 104-109 (ATRSTE), 131-137 (RLKNYSS), and Glu-156. The Gate loop motif lies at 100-104 (SGLPA). The Latch loop signature appears at 130 to 132 (HRL).

It belongs to the PYR/PYL/RCAR abscisic acid intracellular receptor family. As to quaternary structure, monomer. Interacts with PP2C50. Binding to PP2C50 is dependent on the presence of abscisic acid (ABA). Interacts with PP2C30 and PP2C53.

It localises to the cytoplasm. The protein resides in the cytosol. The protein localises to the nucleus. Involved in abscisic acid (ABA) signaling during seed germination and abiotic stress response. Acts as a positive regulator of ABA-mediated inhibition of seed germination, and tolerance to drought and cold stresses. Together with PP2C50 and SAPK10, may form an ABA signaling module involved in stress response. Inhibits the protein phosphatases PP2C06 and PP2C09 when activated by abscisic acid (ABA). This Oryza sativa subsp. japonica (Rice) protein is Abscisic acid receptor PYL3.